The primary structure comprises 433 residues: Chaperone SurA (433 aa).

A signal peptide spans 1–28 (MTAITRITLTGALLAAALLLAALQPARA). 2 consecutive PpiC domains span residues 174–277 (NQEY…KLMD) and 286–386 (VTET…QVTD).

It localises to the periplasm. The catalysed reaction is [protein]-peptidylproline (omega=180) = [protein]-peptidylproline (omega=0). Functionally, chaperone involved in the correct folding and assembly of outer membrane proteins. Recognizes specific patterns of aromatic residues and the orientation of their side chains, which are found more frequently in integral outer membrane proteins. May act in both early periplasmic and late outer membrane-associated steps of protein maturation. The polypeptide is Chaperone SurA (Alkalilimnicola ehrlichii (strain ATCC BAA-1101 / DSM 17681 / MLHE-1)).